The chain runs to 553 residues: Transcriptional regulator HilA (553 aa).

The ompR/PhoB-type DNA-binding region spans 11–107 (NKKFVFDDFI…LYGQGYRFNR (97 aa)). Asp62 carries the 4-aspartylphosphate modification. The stretch at 372-405 (ADIKYYYGWNLFMAGQLEEALQTINECLKLDPTR) is one TPR repeat.

Its function is as follows. The main transcriptional regulator of the Salmonella pathogenicity island 1 (SPI1) gene expression. Activates the expression of invasion genes by a direct action at their promoters and also indirectly by increasing the level of invF. Also binds upstream of prgH and directly activates the expression of prgHIJK operon. The protein is Transcriptional regulator HilA (hilA) of Salmonella typhi.